A 513-amino-acid polypeptide reads, in one-letter code: MKNSMNVSEIASIIREKVETFDNPIKRENIGEVISVTDGIALVYGLEKAKFGEKVFFASGVEGIVLDLDHDTAGIVVLGNDRDVKEGDVVKCSGDVVQVPVGHELLGRVVNALGHPMDDGGEIRAKNRMDIESKAPGIIDRKSVHEPLQTGIKIIDLLIPIGRGQRELIIGDRQIGKTTIALDTIINQKKINDEVNENQKVYCVYVAIGQKISTVAKVVNKLKESGALEYTTVVVASASDCAPMQFLAPYAGCTIGEFFRDNGMHCLIIYDDLSKHAVAYRQMSLLLRRPPGREAYPGDIFYVHSRLLERAAKMSDKKGQGSLTALPIVETQAGDVSAYVPTNVISITDGQIFLESELFYKGFRPAVNIGLSVSRVGSAAQLKSVKKVAGSIKLSLAQYRELEDFAKFGSDLDASVQLSLNKGKYLVELLKQKQHLPMSIEEQVVLMYIFSNLYNQLSKIQISYINKFEHDLINYFHTVHPGVLKKLSNDMSDDIKGDIFNIVSNFVTQFNCV.

171–178 (GDRQIGKT) is a binding site for ATP.

This sequence belongs to the ATPase alpha/beta chains family. F-type ATPases have 2 components, CF(1) - the catalytic core - and CF(0) - the membrane proton channel. CF(1) has five subunits: alpha(3), beta(3), gamma(1), delta(1), epsilon(1). CF(0) has three main subunits: a(1), b(2) and c(9-12). The alpha and beta chains form an alternating ring which encloses part of the gamma chain. CF(1) is attached to CF(0) by a central stalk formed by the gamma and epsilon chains, while a peripheral stalk is formed by the delta and b chains.

Its subcellular location is the cell inner membrane. The catalysed reaction is ATP + H2O + 4 H(+)(in) = ADP + phosphate + 5 H(+)(out). Functionally, produces ATP from ADP in the presence of a proton gradient across the membrane. The alpha chain is a regulatory subunit. The sequence is that of ATP synthase subunit alpha from Wolbachia sp. subsp. Drosophila simulans (strain wRi).